Here is a 248-residue protein sequence, read N- to C-terminus: Triosephosphate isomerase (248 aa).

A substrate-binding site is contributed by 14-16 (NWK). Histidine 99 (electrophile) is an active-site residue. Catalysis depends on glutamate 170, which acts as the Proton acceptor. Residues glycine 176, serine 212, and 233–234 (GG) contribute to the substrate site.

It belongs to the triosephosphate isomerase family. As to quaternary structure, homodimer.

The protein localises to the cytoplasm. It carries out the reaction D-glyceraldehyde 3-phosphate = dihydroxyacetone phosphate. It participates in carbohydrate biosynthesis; gluconeogenesis. It functions in the pathway carbohydrate degradation; glycolysis; D-glyceraldehyde 3-phosphate from glycerone phosphate: step 1/1. Functionally, involved in the gluconeogenesis. Catalyzes stereospecifically the conversion of dihydroxyacetone phosphate (DHAP) to D-glyceraldehyde-3-phosphate (G3P). This chain is Triosephosphate isomerase, found in Bordetella bronchiseptica (strain ATCC BAA-588 / NCTC 13252 / RB50) (Alcaligenes bronchisepticus).